Consider the following 66-residue polypeptide: Large ribosomal subunit protein uL29 (66 aa).

Belongs to the universal ribosomal protein uL29 family.

In Thermococcus onnurineus (strain NA1), this protein is Large ribosomal subunit protein uL29.